A 161-amino-acid polypeptide reads, in one-letter code: Phosphopantetheine adenylyltransferase (161 aa).

Substrate is bound at residue serine 9. ATP contacts are provided by residues 9 to 10 (SF) and histidine 17. Residues lysine 41, leucine 73, and lysine 87 each coordinate substrate. Residues 88-90 (GLR), glutamate 98, and 122-128 (YSFVSSS) contribute to the ATP site.

Belongs to the bacterial CoaD family. In terms of assembly, homohexamer. Mg(2+) is required as a cofactor.

It localises to the cytoplasm. The enzyme catalyses (R)-4'-phosphopantetheine + ATP + H(+) = 3'-dephospho-CoA + diphosphate. It participates in cofactor biosynthesis; coenzyme A biosynthesis; CoA from (R)-pantothenate: step 4/5. Reversibly transfers an adenylyl group from ATP to 4'-phosphopantetheine, yielding dephospho-CoA (dPCoA) and pyrophosphate. This is Phosphopantetheine adenylyltransferase from Mycobacteroides abscessus (strain ATCC 19977 / DSM 44196 / CCUG 20993 / CIP 104536 / JCM 13569 / NCTC 13031 / TMC 1543 / L948) (Mycobacterium abscessus).